A 582-amino-acid polypeptide reads, in one-letter code: MTDATINLHADFARVIDAALDALEAAGTLPGTLSRSAVTCEPPRDPSHGDLATNAAMVLAKPAGTNPRALATALAAELEKEPRVVSAEIAGPGFINLRLTDDAWRGELALIGSAGADYGRSTMGGSKVVNVEYVSANPTGPMHMGHCRGAVVGDALADLLAFSGHQVIKEYYVNDAGAQVDVLARSVHMRYREALGETVEIPEGLYPGDYLVPVGKALAEEFGDKYAKAAEADWLILFRTRAVAAMMDMIRSDLATLGIHHDLFSSEAELQASGKVDAAEQWLRAHDLVYDGLLEAPKGKTPEDWEPVVLPLFRSTKFGDDQDRPIKKSNGAWTYFGADLAYHFQKAQTADALVDIWGADHAGTVKRIKAAVAALTSADGGTPKPFEVKLVQMVQLLRDGEPVKMSKRSGNFVTLSDVVEEVGKDVVRFTMLTRKPDAQMDFDFAKVVEASKDNPVFYVQYAHARICRNLRKGADEGFAPSSANLDLLGDEELALVKLAAQFPRTIEAAAAAREPHRIAFFLHDLASAFHSFYNLGNDRPDKRFIVAQDSAMTAARLFLAAQIGQVIRNGLAVLGVEAAQEL.

The 'HIGH' region motif lies at 136 to 146; sequence ANPTGPMHMGH.

The protein belongs to the class-I aminoacyl-tRNA synthetase family. Monomer.

The protein localises to the cytoplasm. It catalyses the reaction tRNA(Arg) + L-arginine + ATP = L-arginyl-tRNA(Arg) + AMP + diphosphate. The protein is Arginine--tRNA ligase of Novosphingobium aromaticivorans (strain ATCC 700278 / DSM 12444 / CCUG 56034 / CIP 105152 / NBRC 16084 / F199).